The chain runs to 62 residues: Andropin (62 aa).

A signal peptide spans 1–22; that stretch reads MKYFSVLVVLTLILAIVDQSDA.

Belongs to the andropin family. In terms of tissue distribution, ejaculatory duct of adult males.

The protein resides in the secreted. Male-specific peptide with moderate activity against Gram-positive bacteria. In Drosophila teissieri (Fruit fly), this protein is Andropin (Anp).